We begin with the raw amino-acid sequence, 224 residues long: Pyridoxal 5'-phosphate synthase subunit SNO1 (224 aa).

An L-glutamine-binding site is contributed by 67–69 (GES). Cys-100 acts as the Nucleophile in catalysis. L-glutamine contacts are provided by residues Arg-129 and 160–161 (IR). Residues His-203 and Glu-205 each act as charge relay system in the active site.

It belongs to the glutaminase PdxT/SNO family.

It carries out the reaction aldehydo-D-ribose 5-phosphate + D-glyceraldehyde 3-phosphate + L-glutamine = pyridoxal 5'-phosphate + L-glutamate + phosphate + 3 H2O + H(+). The catalysed reaction is L-glutamine + H2O = L-glutamate + NH4(+). Its pathway is cofactor biosynthesis; pyridoxal 5'-phosphate biosynthesis. Its function is as follows. Catalyzes the hydrolysis of glutamine to glutamate and ammonia as part of the biosynthesis of pyridoxal 5'-phosphate. The resulting ammonia molecule is channeled to the active site of a SNZ isoform. The sequence is that of Pyridoxal 5'-phosphate synthase subunit SNO1 (SNO1) from Saccharomyces cerevisiae (strain ATCC 204508 / S288c) (Baker's yeast).